Consider the following 470-residue polypeptide: Sulfate adenylyltransferase subunit 1 (470 aa).

Residues 22 to 238 (KELLRFITCG…ETIKIDYAYT (217 aa)) form the tr-type G domain. The G1 stretch occupies residues 31–38 (GSVDDGKS). 31–38 (GSVDDGKS) provides a ligand contact to GTP. The segment at 89–93 (GITID) is G2. The G3 stretch occupies residues 110–113 (DTPG). GTP contacts are provided by residues 110 to 114 (DTPGH) and 165 to 168 (NKMD). Positions 165–168 (NKMD) are G4. The segment at 202 to 204 (SAL) is G5.

The protein belongs to the TRAFAC class translation factor GTPase superfamily. Classic translation factor GTPase family. CysN/NodQ subfamily. Heterodimer composed of CysD, the smaller subunit, and CysN.

The enzyme catalyses sulfate + ATP + H(+) = adenosine 5'-phosphosulfate + diphosphate. It participates in sulfur metabolism; hydrogen sulfide biosynthesis; sulfite from sulfate: step 1/3. With CysD forms the ATP sulfurylase (ATPS) that catalyzes the adenylation of sulfate producing adenosine 5'-phosphosulfate (APS) and diphosphate, the first enzymatic step in sulfur assimilation pathway. APS synthesis involves the formation of a high-energy phosphoric-sulfuric acid anhydride bond driven by GTP hydrolysis by CysN coupled to ATP hydrolysis by CysD. The polypeptide is Sulfate adenylyltransferase subunit 1 (Francisella tularensis subsp. tularensis (strain SCHU S4 / Schu 4)).